Here is a 542-residue protein sequence, read N- to C-terminus: Chaperonin GroEL 2 (542 aa).

ATP contacts are provided by residues 30 to 33 (TLGP), K51, 87 to 91 (DGTTT), G415, and D496.

Belongs to the chaperonin (HSP60) family. In terms of assembly, forms a cylinder of 14 subunits composed of two heptameric rings stacked back-to-back. Interacts with the co-chaperonin GroES.

The protein localises to the cytoplasm. The enzyme catalyses ATP + H2O + a folded polypeptide = ADP + phosphate + an unfolded polypeptide.. In terms of biological role, together with its co-chaperonin GroES, plays an essential role in assisting protein folding. The GroEL-GroES system forms a nano-cage that allows encapsulation of the non-native substrate proteins and provides a physical environment optimized to promote and accelerate protein folding. This is Chaperonin GroEL 2 from Azorhizobium caulinodans (strain ATCC 43989 / DSM 5975 / JCM 20966 / LMG 6465 / NBRC 14845 / NCIMB 13405 / ORS 571).